The primary structure comprises 417 residues: MSLSNKLTLDKLDVKGKRVVMRVDFNVPMKNNQITNNQRIKAAIPSIKFCLDNGAKSVVLMSHLGRPDGIPMPDKYSLEPVAVELKSLPGKDVLFLKDCVGPEVEKACADPAAGSVILLENLRFHVEEEGKGKDASGSKVKADPAKIEAFRASLSKLGDVYVNDAFGTAHRAHSSMVGVNLPKKAGGFLMKKELNYFAKALESPERPFLAILGGAKVADKIQLINNMLDKVNEMIIGGGMAFTFLKVLNNMEIGTSLFDEEGSKIVKDLMSKAEKNGVKITLPVDFVTADKFDENAKIGQATVASGIPAGWMGLDCGPESSKKYSEAVARAKQIVWNGPVGVFEWEAFAQGTKALMDEVVKATSRGCITIIGGGDTATCCAKWNTEDKVSHVSTGGGASLELLEGKVLPGVDALSNV.

Ser-2 is modified (N-acetylserine). Phosphoserine is present on residues Ser-2 and Ser-4. Lys-6 bears the N6-succinyllysine mark. Position 11 is an N6-acetyllysine (Lys-11). Residues Val-23, Asp-24, Phe-25, Asn-26, Gln-38, and Arg-39 each coordinate (2R)-3-phosphoglycerate. Residues 38-43 are mitochondrial targeting region exposed following cis-trans isomerization by PIN1 and recognized by the TOM complex for mitochondrial translocation of the protein; the sequence is QRIKAA. Lys-48 carries the post-translational modification N6-acetyllysine; alternate. Lys-48 is modified (N6-succinyllysine; alternate). (2R)-3-phosphoglycerate-binding residues include Ser-62, His-63, Gly-65, and Arg-66. At Lys-75 the chain carries N6-acetyllysine. The residue at position 76 (Tyr-76) is a Phosphotyrosine. 2 positions are modified to N6-acetyllysine: Lys-86 and Lys-91. An N6-acetyllysine; alternate modification is found at Lys-97. At Lys-97 the chain carries N6-(2-hydroxyisobutyryl)lysine; alternate. (2R)-3-phosphoglycerate is bound by residues Leu-122 and Arg-123. Position 131 is an N6-acetyllysine; alternate (Lys-131). Lys-131 is modified (N6-malonyllysine; alternate). N6-acetyllysine is present on Lys-146. (2R)-3-phosphoglycerate contacts are provided by His-170 and Arg-171. At Lys-191 the chain carries N6-succinyllysine. Phosphotyrosine is present on Tyr-196. N6-acetyllysine is present on Lys-199. Ser-203 carries the phosphoserine modification. ADP is bound at residue Gly-214. Position 214 (Gly-214) interacts with CDP. AMP is bound by residues Ala-215 and Lys-216. Residue Ala-215 coordinates ATP. Ala-215 provides a ligand contact to Mg(2+). The residue at position 216 (Lys-216) is an N6-(2-hydroxyisobutyryl)lysine. Mg(2+) is bound by residues Ala-218 and Asp-219. Asp-219 provides a ligand contact to CDP. Residue Lys-220 coordinates AMP. Lys-220 is an ATP binding site. The residue at position 220 (Lys-220) is an N6-(2-hydroxyisobutyryl)lysine. Gly-238 contributes to the ADP binding site. A CDP-binding site is contributed by Gly-238. An AMP-binding site is contributed by Gly-239. Residue Gly-239 participates in ATP binding. An N6-acetyllysine mark is found at Lys-267 and Lys-291. Position 313 (Gly-313) interacts with AMP. Gly-313 serves as a coordination point for ATP. Position 323 is an N6-(2-hydroxyisobutyryl)lysine (Lys-323). Positions 338, 340, and 343 each coordinate CDP. Phe-343 lines the ADP pocket. Glu-344 contacts AMP. ATP is bound at residue Glu-344. Lys-361 is modified (N6-acetyllysine). ATP-binding residues include Asp-375 and Thr-376. Asp-375 provides a ligand contact to Mg(2+).

Belongs to the phosphoglycerate kinase family. In terms of assembly, monomer. Interacts with kinase MAPK1/ERK2; the interaction is direct, occurs under hypoxic conditions, and promotes its interaction with PIN1. Interacts with peptidyl-prolyl cis-trans isomerase PIN1; the interaction is direct, occurs under hypoxic conditions, and targets the protein to the mitochondrion by promoting interactions with the TOM complex. Interacts with mitochondrial circRNA mcPGK1 (via its 2nd stem-loop); the interaction is direct and targets the protein to the mitochondrion by promoting interactions with the TOM complex. Interacts with pyruvate dehydrogenase kinase PDK1; the interaction is direct, occurs under hypoxic conditions and leads to PDK1-mediated inhibition of pyruvate dehydrogenase complex activity. Mg(2+) serves as cofactor. Post-translationally, phosphorylated at Ser-203 by MAPK1/ERK2 under hypoxic conditions, which promotes its mitochondrial targeting.

It is found in the cytoplasm. It localises to the cytosol. The protein localises to the mitochondrion matrix. The enzyme catalyses (2R)-3-phosphoglycerate + ATP = (2R)-3-phospho-glyceroyl phosphate + ADP. The catalysed reaction is L-seryl-[protein] + ATP = O-phospho-L-seryl-[protein] + ADP + H(+). Its pathway is carbohydrate degradation; glycolysis; pyruvate from D-glyceraldehyde 3-phosphate: step 2/5. Catalyzes one of the two ATP producing reactions in the glycolytic pathway via the reversible conversion of 1,3-diphosphoglycerate to 3-phosphoglycerate. Both L- and D- forms of purine and pyrimidine nucleotides can be used as substrates, but the activity is much lower on pyrimidines. In addition to its role as a glycolytic enzyme, it seems that PGK-1 acts as a polymerase alpha cofactor protein (primer recognition protein). Acts as a protein kinase when localized to the mitochondrion where it phosphorylates pyruvate dehydrogenase kinase PDK1 to inhibit pyruvate dehydrogenase complex activity and suppress the formation of acetyl-coenzyme A from pyruvate, and consequently inhibit oxidative phosphorylation and promote glycolysis. May play a role in sperm motility. This Sus scrofa (Pig) protein is Phosphoglycerate kinase 1 (PGK1).